The sequence spans 656 residues: Tetratricopeptide repeat protein 30 homolog (656 aa).

TPR repeat units follow at residues 9-42 (EGEF…NPKN), 43-76 (LAAL…FPQY), 141-174 (AAVI…SGYQ), 176-208 (GLAY…GVKD), 238-271 (IEAF…NEHD), 378-412 (RKTA…DDSL), 416-449 (LPVL…CKEH), 451-484 (TWKL…KYDD), and 537-570 (SIIS…PEKK).

This sequence belongs to the TTC30/dfy-1/fleer family. In terms of assembly, component of the IFT complex B composed of at least che-2, che-13, dyf-1, dyf-3, dyf-6, dyf-11, dyf-13, ift-20, ift-74, ift-81, ifta-2, osm-1, osm-5 and osm-6. In terms of tissue distribution, expressed in most amphid, both phasmid and several labial-quadrant neurons.

The protein resides in the cell projection. It localises to the cilium. Its function is as follows. Plays a role in anterograde intraflagellar transport (IFT), the process by which cilia precursors are transported from the base of the cilium to the site of their incorporation at the tip. Specifically required for the kinesin osm-3 to dock onto and move the IFT particles which contain these precursors. Component of the intraflagellar transport (IFT) complex B required for transport of proteins in the motile cilium. May be required for ciliary entrance and transport of specific ciliary cargo proteins such as che-3 which are related to motility. Required for polyglutamylation of axonemal tubulin in sensory cilia. This is Tetratricopeptide repeat protein 30 homolog from Caenorhabditis elegans.